A 117-amino-acid chain; its full sequence is Large ribosomal subunit protein bL20 (117 aa).

The protein belongs to the bacterial ribosomal protein bL20 family.

Its function is as follows. Binds directly to 23S ribosomal RNA and is necessary for the in vitro assembly process of the 50S ribosomal subunit. It is not involved in the protein synthesizing functions of that subunit. This is Large ribosomal subunit protein bL20 from Crocosphaera subtropica (strain ATCC 51142 / BH68) (Cyanothece sp. (strain ATCC 51142)).